The following is a 154-amino-acid chain: Ribonuclease H (154 aa).

One can recognise an RNase H type-1 domain in the interval 3–144 (ELPVVSIFTD…ADQLARDGVA (142 aa)). Residues aspartate 12, glutamate 50, aspartate 72, and aspartate 136 each contribute to the Mg(2+) site.

Belongs to the RNase H family. Monomer. Mg(2+) is required as a cofactor.

The protein localises to the cytoplasm. The catalysed reaction is Endonucleolytic cleavage to 5'-phosphomonoester.. Functionally, endonuclease that specifically degrades the RNA of RNA-DNA hybrids. The chain is Ribonuclease H from Bradyrhizobium sp. (strain ORS 278).